Reading from the N-terminus, the 292-residue chain is MASLKDLRNRIASVKATQKITKAMQMVAAAKLRRAQNAAENARPYAERMAAVLGNLATNLTPGAETPRLLAGTGADRVHLLVVCTAERGLCGAFNSSIARLARDHARRLVAEGKTVKIICVGKKGYDILRREFRDQIVELIELRGVRQLGFENAEAVTENLLNRFEAGEFDIATLFYSRFRSVIAQVPTAQQIIPAEISPASESAQTDAAYEYEPEEGEILAALLPKNLTVQILRALLENAASEQGARMSAMDSATRNAGEMIKKQTLVYNRTRQAMITKELIEIISGAEAL.

It belongs to the ATPase gamma chain family. In terms of assembly, F-type ATPases have 2 components, CF(1) - the catalytic core - and CF(0) - the membrane proton channel. CF(1) has five subunits: alpha(3), beta(3), gamma(1), delta(1), epsilon(1). CF(0) has three main subunits: a, b and c.

The protein resides in the cell inner membrane. Functionally, produces ATP from ADP in the presence of a proton gradient across the membrane. The gamma chain is believed to be important in regulating ATPase activity and the flow of protons through the CF(0) complex. In Methylobacterium nodulans (strain LMG 21967 / CNCM I-2342 / ORS 2060), this protein is ATP synthase gamma chain.